We begin with the raw amino-acid sequence, 128 residues long: Phosphoribosyl-AMP cyclohydrolase (128 aa).

Asp-77 is a Mg(2+) binding site. Position 78 (Cys-78) interacts with Zn(2+). Asp-79 and Asp-81 together coordinate Mg(2+). Cys-95 and Cys-102 together coordinate Zn(2+).

The protein belongs to the PRA-CH family. In terms of assembly, homodimer. Requires Mg(2+) as cofactor. The cofactor is Zn(2+).

Its subcellular location is the cytoplasm. It catalyses the reaction 1-(5-phospho-beta-D-ribosyl)-5'-AMP + H2O = 1-(5-phospho-beta-D-ribosyl)-5-[(5-phospho-beta-D-ribosylamino)methylideneamino]imidazole-4-carboxamide. It functions in the pathway amino-acid biosynthesis; L-histidine biosynthesis; L-histidine from 5-phospho-alpha-D-ribose 1-diphosphate: step 3/9. Functionally, catalyzes the hydrolysis of the adenine ring of phosphoribosyl-AMP. This chain is Phosphoribosyl-AMP cyclohydrolase, found in Methylococcus capsulatus (strain ATCC 33009 / NCIMB 11132 / Bath).